A 260-amino-acid polypeptide reads, in one-letter code: Thrombin-like enzyme acutobin (260 aa).

Positions 1–18 (MVLIRVLANLLILQLSYA) are cleaved as a signal peptide. Positions 19–24 (QKSSEL) are excised as a propeptide. Residues 25–251 (VIGGVECDIN…YNDWIRSITA (227 aa)) form the Peptidase S1 domain. 6 cysteine pairs are disulfide-bonded: cysteine 31–cysteine 165, cysteine 52–cysteine 68, cysteine 102–cysteine 258, cysteine 144–cysteine 212, cysteine 176–cysteine 191, and cysteine 202–cysteine 227. Histidine 67 (charge relay system) is an active-site residue. N-linked (GlcNAc...) asparagine glycans are attached at residues asparagine 101 and asparagine 105. The Charge relay system role is filled by aspartate 112. N-linked (GlcNAc...) asparagine glycosylation is present at asparagine 124. Catalysis depends on serine 206, which acts as the Charge relay system. Asparagine 253 carries an N-linked (GlcNAc...) asparagine glycan.

Belongs to the peptidase S1 family. Snake venom subfamily. In terms of assembly, monomer. Post-translationally, N-glycosylated. Expressed by the venom gland.

It is found in the secreted. Functionally, thrombin-like snake venom serine protease that coagulates human fibrinogen by hydrolysis of the alpha chains (FGA). This Deinagkistrodon acutus (Hundred-pace snake) protein is Thrombin-like enzyme acutobin.